The primary structure comprises 333 residues: Holliday junction branch migration complex subunit RuvB (333 aa).

Positions 1 to 182 (MEERLVSGEV…FGVISRLEYY (182 aa)) are large ATPase domain (RuvB-L). ATP-binding positions include Leu-21, Arg-22, Gly-63, Lys-66, Thr-67, Thr-68, 129–131 (EDY), Arg-172, Tyr-182, and Arg-219. Mg(2+) is bound at residue Thr-67. Positions 183 to 253 (HVDQLAQIIE…LAVEALERLQ (71 aa)) are small ATPAse domain (RuvB-S). Residues 256–333 (RLGLDQIDHK…THLGMEVPKR (78 aa)) form a head domain (RuvB-H) region. Residues Arg-311 and Arg-316 each coordinate DNA.

The protein belongs to the RuvB family. Homohexamer. Forms an RuvA(8)-RuvB(12)-Holliday junction (HJ) complex. HJ DNA is sandwiched between 2 RuvA tetramers; dsDNA enters through RuvA and exits via RuvB. An RuvB hexamer assembles on each DNA strand where it exits the tetramer. Each RuvB hexamer is contacted by two RuvA subunits (via domain III) on 2 adjacent RuvB subunits; this complex drives branch migration. In the full resolvosome a probable DNA-RuvA(4)-RuvB(12)-RuvC(2) complex forms which resolves the HJ.

The protein localises to the cytoplasm. It carries out the reaction ATP + H2O = ADP + phosphate + H(+). Its function is as follows. The RuvA-RuvB-RuvC complex processes Holliday junction (HJ) DNA during genetic recombination and DNA repair, while the RuvA-RuvB complex plays an important role in the rescue of blocked DNA replication forks via replication fork reversal (RFR). RuvA specifically binds to HJ cruciform DNA, conferring on it an open structure. The RuvB hexamer acts as an ATP-dependent pump, pulling dsDNA into and through the RuvAB complex. RuvB forms 2 homohexamers on either side of HJ DNA bound by 1 or 2 RuvA tetramers; 4 subunits per hexamer contact DNA at a time. Coordinated motions by a converter formed by DNA-disengaged RuvB subunits stimulates ATP hydrolysis and nucleotide exchange. Immobilization of the converter enables RuvB to convert the ATP-contained energy into a lever motion, pulling 2 nucleotides of DNA out of the RuvA tetramer per ATP hydrolyzed, thus driving DNA branch migration. The RuvB motors rotate together with the DNA substrate, which together with the progressing nucleotide cycle form the mechanistic basis for DNA recombination by continuous HJ branch migration. Branch migration allows RuvC to scan DNA until it finds its consensus sequence, where it cleaves and resolves cruciform DNA. The chain is Holliday junction branch migration complex subunit RuvB from Geobacillus kaustophilus (strain HTA426).